The primary structure comprises 96 residues: Phosphoribosyl-ATP pyrophosphatase (96 aa).

Belongs to the PRA-PH family.

It is found in the cytoplasm. It carries out the reaction 1-(5-phospho-beta-D-ribosyl)-ATP + H2O = 1-(5-phospho-beta-D-ribosyl)-5'-AMP + diphosphate + H(+). It functions in the pathway amino-acid biosynthesis; L-histidine biosynthesis; L-histidine from 5-phospho-alpha-D-ribose 1-diphosphate: step 2/9. This Methanobrevibacter smithii (strain ATCC 35061 / DSM 861 / OCM 144 / PS) protein is Phosphoribosyl-ATP pyrophosphatase.